The chain runs to 299 residues: Delta-9 desaturase-like 5 protein (299 aa).

The next 2 membrane-spanning stretches (helical) occupy residues 31–51 (ADII…LAPF) and 55–75 (WEAL…ITFS). Residues 77–82 (HRNLAH) carry the Histidine box-1 motif. The short motif at 114–118 (HRFHH) is the Histidine box-2 element. 2 helical membrane-spanning segments follow: residues 174 to 194 (IGFH…LPYL) and 199 to 219 (GVGG…CHIW). A Histidine box-3 motif is present at residues 246 to 250 (HNNHH).

This sequence belongs to the fatty acid desaturase type 1 family. Fe cation serves as cofactor.

It localises to the endoplasmic reticulum membrane. The protein operates within lipid metabolism; polyunsaturated fatty acid biosynthesis. In Arabidopsis thaliana (Mouse-ear cress), this protein is Delta-9 desaturase-like 5 protein.